The chain runs to 162 residues: Sorting nexin-3 (162 aa).

Ala2 is modified (N-acetylalanine). The PX domain occupies 27 to 151 (NFLEIDVSNP…HMFLQDEIID (125 aa)). Residue Arg43 is modified to Omega-N-methylarginine. A 1,2-diacyl-sn-glycero-3-phospho-(1D-myo-inositol-3-phosphate) is bound by residues Arg70, Ser72, Lys95, and Arg118. A Phosphoserine modification is found at Ser72. Residue Lys95 forms a Glycyl lysine isopeptide (Lys-Gly) (interchain with G-Cter in SUMO2) linkage. The binds predominantly to PtdIns(P5) and weaker to PtdIns(P3) abd PtdIns(P4); involved in neurite outgrowth regulation stretch occupies residues 147–162 (DEIIDKSYTPSKIRHA).

The protein belongs to the sorting nexin family. In terms of assembly, interacts with VPS26A, VPS29. Interacts with VPS35; the interaction with VPS35 is direct. The association with the retromer CSC subcomplex subunits is proposed to represent a functional distinct retromer variant described as SNX3-retromer complex. Interacts with USP10 and SCNN1A. Interacts with TRFC. Interacts with SNX8; 2 molecules of SNX8 seems to associate with one molecule of SNX3. Interacts with PTPRU. Interacts with MON2 and DOP1B. Post-translationally, ubiquitinated, leading to its proteasomal degradation. Deubiquitinated by USP10. In terms of tissue distribution, highly expressed in developing red cells and hematopoietic tissues.

Its subcellular location is the early endosome. The protein localises to the cytoplasmic vesicle. It is found in the phagosome. Phosphoinositide-binding protein required for multivesicular body formation. Specifically binds phosphatidylinositol 3-phosphate (PtdIns(P3)). Can also bind phosphatidylinositol 4-phosphate (PtdIns(P4)), phosphatidylinositol 5-phosphate (PtdIns(P5)) and phosphatidylinositol 3,5-biphosphate (PtdIns(3,5)P2). Plays a role in protein transport between cellular compartments. Together with RAB7A facilitates endosome membrane association of the retromer cargo-selective subcomplex (CSC). May act in part as component of the SNX3-retromer complex which mediates the retrograde endosome-to-TGN transport of WLS distinct from the SNX-BAR retromer pathway. Promotes stability and cell surface expression of epithelial sodium channel (ENAC) subunits SCNN1A and SCNN1G. Not involved in EGFR degradation. Involved in the regulation of phagocytosis in dendritic cells possibly by regulating EEA1 recruitment to the nascent phagosomes. Involved in iron homeostasis through regulation of endocytic recycling of the transferrin receptor Tfrc presuambly by delivering the transferrin:transferrin receptor complex to recycling endosomes; the function may involve the CSC retromer subcomplex. Involved in regulation of neurite outgrowth in primary neurons. This is Sorting nexin-3 (Snx3) from Mus musculus (Mouse).